Here is a 287-residue protein sequence, read N- to C-terminus: uncharacterized protein (287 aa).

The 99-residue stretch at 183-281 (WEAARYLQEH…GISPIEYRKI (99 aa)) folds into the HTH araC/xylS-type domain. 2 consecutive DNA-binding regions (H-T-H motif) follow at residues 200 to 221 (KDLS…QQVL) and 248 to 271 (MGVI…KQIE).

This is an uncharacterized protein from Bacillus subtilis (strain 168).